The sequence spans 240 residues: Epoxyqueuosine reductase QueH (240 aa).

Residues C43, C44, C129, and C132 each contribute to the [4Fe-4S] cluster site. The cysteines at positions 211 and 213 are disulfide-linked.

Belongs to the QueH family.

The enzyme catalyses epoxyqueuosine(34) in tRNA + AH2 = queuosine(34) in tRNA + A + H2O. It participates in tRNA modification; tRNA-queuosine biosynthesis. Functionally, catalyzes the conversion of epoxyqueuosine (oQ) to queuosine (Q), which is a hypermodified base found in the wobble positions of tRNA(Asp), tRNA(Asn), tRNA(His) and tRNA(Tyr). This Staphylococcus aureus (strain Mu50 / ATCC 700699) protein is Epoxyqueuosine reductase QueH.